The sequence spans 290 residues: TIMELESS-interacting protein (290 aa).

Residues 1 to 59 (MLEPQENGLTDLPDYEHIEDETFPPFPPPASPGREDGEGAEPEEESGRGAPVPVPPKRT) form a disordered region. The interval 67 to 143 (LNAERLISER…KEVQTCLKRI (77 aa)) is interaction with TIMELESS. A phosphoserine mark is found at S194 and S222. The span at 221-242 (NSQSLGNDLSVNTPSTQTSEAG) shows a compositional bias: polar residues. The segment at 221–290 (NSQSLGNDLS…VEETQLDQSF (70 aa)) is disordered. T233 and T244 each carry phosphothreonine.

The protein belongs to the CSM3 family. Interacts with TIMELESS (via N-terminus), which impairs TIMELESS self-association. Associates with the MCM2-7 complex. Interacts with RPA2, PRDX2.

It is found in the cytoplasm. Its subcellular location is the nucleus. In terms of biological role, plays an important role in the control of DNA replication and the maintenance of replication fork stability. Important for cell survival after DNA damage or replication stress. May be specifically required for the ATR-CHEK1 pathway in the replication checkpoint induced by hydroxyurea or ultraviolet light. Forms a complex with TIMELESS and this complex regulates DNA replication processes under both normal and stress conditions, stabilizes replication forks and influences both CHEK1 phosphorylation and the intra-S phase checkpoint in response to genotoxic stress. The chain is TIMELESS-interacting protein (TIPIN) from Bos taurus (Bovine).